Here is a 587-residue protein sequence, read N- to C-terminus: Phosphatidylinositol-3-phosphatase SAC1 (587 aa).

Topologically, residues M1–K520 are cytoplasmic. One can recognise an SAC domain in the interval L122–G451. The tract at residues T452–D587 is essential for phosphatidylinositol-4-phosphate phosphatase activity. K456 is modified (N6-acetyllysine). A helical transmembrane segment spans residues F521–M541. At A542–E548 the chain is on the lumenal side. A helical membrane pass occupies residues T549–Y569. Residues N570–D587 lie on the Cytoplasmic side of the membrane.

Interacts with TMEM39A. Interacts with SEC23A and SEC24A; this interaction is reduced in the absence of TMEM39A. Interacts with PLEKHA3 and VAPA and/or VAPB to form a ternary complex. As to expression, detected in spleen, lung, liver, skeletal muscle, kidney, testis and in cerebellar Purkinje cells (at protein level). Ubiquitous. Highly expressed in brain, spleen, liver and kidney.

It is found in the endoplasmic reticulum membrane. Its subcellular location is the golgi apparatus membrane. It carries out the reaction a 1,2-diacyl-sn-glycero-3-phospho-(1D-myo-inositol-3-phosphate) + H2O = a 1,2-diacyl-sn-glycero-3-phospho-(1D-myo-inositol) + phosphate. The enzyme catalyses a 1,2-diacyl-sn-glycero-3-phospho-(1D-myo-inositol 4-phosphate) + H2O = a 1,2-diacyl-sn-glycero-3-phospho-(1D-myo-inositol) + phosphate. Its function is as follows. Phosphoinositide phosphatase which catalyzes the hydrolysis of phosphatidylinositol 4-phosphate (PtdIns(4)P), phosphatidylinositol 3-phosphate (PtdIns(3)P) and has low activity towards phosphatidylinositol-3,5-bisphosphate (PtdIns(3,5)P2). Shows a very robust PtdIns(4)P phosphatase activity when it binds PtdIns(4)P in a 'cis' configuration in the cellular environment, with much less activity seen when it binds PtdIns(4)P in 'trans' configuration. PtdIns(4)P phosphatase activity (when it binds PtdIns(4)P in 'trans' configuration) is enhanced in the presence of PLEKHA3. The sequence is that of Phosphatidylinositol-3-phosphatase SAC1 (Sacm1l) from Rattus norvegicus (Rat).